A 252-amino-acid polypeptide reads, in one-letter code: Triosephosphate isomerase (252 aa).

9–11 (NWK) serves as a coordination point for substrate. The active-site Electrophile is the His96. The active-site Proton acceptor is the Glu166. Substrate-binding positions include Gly172, Ser212, and 233–234 (GG).

This sequence belongs to the triosephosphate isomerase family. Homodimer.

Its subcellular location is the cytoplasm. The catalysed reaction is D-glyceraldehyde 3-phosphate = dihydroxyacetone phosphate. It functions in the pathway carbohydrate biosynthesis; gluconeogenesis. Its pathway is carbohydrate degradation; glycolysis; D-glyceraldehyde 3-phosphate from glycerone phosphate: step 1/1. In terms of biological role, involved in the gluconeogenesis. Catalyzes stereospecifically the conversion of dihydroxyacetone phosphate (DHAP) to D-glyceraldehyde-3-phosphate (G3P). This chain is Triosephosphate isomerase, found in Chlorobium chlorochromatii (strain CaD3).